The sequence spans 339 residues: Dihydroorotate dehydrogenase (quinone) (339 aa).

FMN contacts are provided by residues Ala62 to Lys66 and Thr86. Position 66 (Lys66) interacts with substrate. Asn111–Phe115 contacts substrate. FMN is bound by residues Asn139 and Asn172. A substrate-binding site is contributed by Asn172. The active-site Nucleophile is Ser175. Substrate is bound at residue Asn177. FMN-binding residues include Lys217 and Thr245. Asn246 to Thr247 provides a ligand contact to substrate. FMN-binding positions include Gly268, Gly297, and Tyr318–Ser319.

The protein belongs to the dihydroorotate dehydrogenase family. Type 2 subfamily. As to quaternary structure, monomer. The cofactor is FMN.

It localises to the cell membrane. The enzyme catalyses (S)-dihydroorotate + a quinone = orotate + a quinol. It participates in pyrimidine metabolism; UMP biosynthesis via de novo pathway; orotate from (S)-dihydroorotate (quinone route): step 1/1. Catalyzes the conversion of dihydroorotate to orotate with quinone as electron acceptor. The polypeptide is Dihydroorotate dehydrogenase (quinone) (Shewanella putrefaciens (strain CN-32 / ATCC BAA-453)).